We begin with the raw amino-acid sequence, 412 residues long: Carboxypeptidase B1 (412 aa).

Positions 1–18 are cleaved as a signal peptide; the sequence is MIPRIVVVLLSVLAVVTA. Residues 19–75 constitute a propeptide, activation peptide; that stretch reads RRSYEGYKVYGIVPESPDEAEILYQIRQSNPDLDFWHLTKQPGDEARVLVAPKDQRS. The region spanning 118-408 is the Peptidase M14 domain; the sequence is SYLRHNEINE…VGIKAMALKV (291 aa). Zn(2+) contacts are provided by His-175 and Glu-178. Residue 175–178 participates in a peptide binding; that stretch reads HARE. A glycan (N-linked (GlcNAc...) asparagine) is linked at Asn-205. A peptide contacts are provided by residues Arg-230 and 246–247; that span reads NR. Cys-240 and Cys-263 are oxidised to a cystine. Residue His-299 participates in Zn(2+) binding. Residues 300 to 301 and Tyr-351 each bind a peptide; that span reads SY. The active-site Proton donor/acceptor is Glu-374. A glycan (N-linked (GlcNAc...) asparagine) is linked at Asn-395.

It belongs to the peptidase M14 family. As to quaternary structure, monomer. Interacts with Dengue virus type 2 (DENV2, MY89-88549 strain) envelope protein E. Interacts with Dengue virus envelope protein E type 3, type 2, type 4 and type 1 with decreasing strength. It depends on Zn(2+) as a cofactor. In terms of tissue distribution, expressed in midgut (at protein level).

Its subcellular location is the endoplasmic reticulum. The catalysed reaction is Preferential release of a C-terminal lysine or arginine amino acid.. Its activity is regulated as follows. Inhibited by S.tuberosum metallocarboxypeptidase inhibitor. Its function is as follows. Carboxypeptidase that preferentially hydrolyzes arginine and lysine residues at the C-terminus. During infection by dengue virus, may play a role in preventing viral packaging, maturation, and release from the midgut. This Aedes aegypti (Yellowfever mosquito) protein is Carboxypeptidase B1.